The sequence spans 117 residues: Immunoglobulin heavy variable 3-30-3 (117 aa).

A signal peptide spans 1 to 19 (MEFGLSWVFLVALLRGVQC). Gln-20 bears the Pyrrolidone carboxylic acid mark. The framework-1 stretch occupies residues 20-44 (QVQLVESGGGVVQPGRSLRLSCAAS). The Ig-like domain maps to 20–117 (QVQLVESGGG…EDTAVYYCAR (98 aa)). Cys-41 and Cys-115 form a disulfide bridge. The interval 45–52 (GFTFSSYA) is complementarity-determining-1. The framework-2 stretch occupies residues 53-69 (MHWVRQAPGKGLEWVAV). The segment at 70 to 77 (ISYDGSNK) is complementarity-determining-2. Residues 78–115 (YYADSVKGRFTISRDNSKNTLYLQMNSLRAEDTAVYYC) are framework-3. The interval 116–117 (AR) is complementarity-determining-3.

In terms of assembly, immunoglobulins are composed of two identical heavy chains and two identical light chains; disulfide-linked.

The protein localises to the secreted. The protein resides in the cell membrane. V region of the variable domain of immunoglobulin heavy chains that participates in the antigen recognition. Immunoglobulins, also known as antibodies, are membrane-bound or secreted glycoproteins produced by B lymphocytes. In the recognition phase of humoral immunity, the membrane-bound immunoglobulins serve as receptors which, upon binding of a specific antigen, trigger the clonal expansion and differentiation of B lymphocytes into immunoglobulins-secreting plasma cells. Secreted immunoglobulins mediate the effector phase of humoral immunity, which results in the elimination of bound antigens. The antigen binding site is formed by the variable domain of one heavy chain, together with that of its associated light chain. Thus, each immunoglobulin has two antigen binding sites with remarkable affinity for a particular antigen. The variable domains are assembled by a process called V-(D)-J rearrangement and can then be subjected to somatic hypermutations which, after exposure to antigen and selection, allow affinity maturation for a particular antigen. In Homo sapiens (Human), this protein is Immunoglobulin heavy variable 3-30-3.